The chain runs to 638 residues: DNA gyrase subunit B (638 aa).

In terms of domain architecture, Toprim spans 431–545 (RELFIVEGNS…YGFVYIAQPP (115 aa)). Mg(2+) is bound by residues glutamate 437, aspartate 510, and aspartate 512.

The protein belongs to the type II topoisomerase GyrB family. Heterotetramer, composed of two GyrA and two GyrB chains. In the heterotetramer, GyrA contains the active site tyrosine that forms a transient covalent intermediate with DNA, while GyrB binds cofactors and catalyzes ATP hydrolysis. Requires Mg(2+) as cofactor. It depends on Mn(2+) as a cofactor. Ca(2+) is required as a cofactor.

The protein resides in the cytoplasm. The catalysed reaction is ATP-dependent breakage, passage and rejoining of double-stranded DNA.. A type II topoisomerase that negatively supercoils closed circular double-stranded (ds) DNA in an ATP-dependent manner to modulate DNA topology and maintain chromosomes in an underwound state. Negative supercoiling favors strand separation, and DNA replication, transcription, recombination and repair, all of which involve strand separation. Also able to catalyze the interconversion of other topological isomers of dsDNA rings, including catenanes and knotted rings. Type II topoisomerases break and join 2 DNA strands simultaneously in an ATP-dependent manner. The sequence is that of DNA gyrase subunit B from Metamycoplasma arthritidis (Mycoplasma arthritidis).